The chain runs to 689 residues: Glycine--tRNA ligase beta subunit (689 aa).

Belongs to the class-II aminoacyl-tRNA synthetase family. In terms of assembly, tetramer of two alpha and two beta subunits.

The protein resides in the cytoplasm. The enzyme catalyses tRNA(Gly) + glycine + ATP = glycyl-tRNA(Gly) + AMP + diphosphate. This chain is Glycine--tRNA ligase beta subunit, found in Salmonella arizonae (strain ATCC BAA-731 / CDC346-86 / RSK2980).